Consider the following 318-residue polypeptide: Homoserine kinase (318 aa).

Pro97 to Cys107 contacts ATP.

The protein belongs to the GHMP kinase family. Homoserine kinase subfamily.

The protein resides in the cytoplasm. The catalysed reaction is L-homoserine + ATP = O-phospho-L-homoserine + ADP + H(+). It functions in the pathway amino-acid biosynthesis; L-threonine biosynthesis; L-threonine from L-aspartate: step 4/5. In terms of biological role, catalyzes the ATP-dependent phosphorylation of L-homoserine to L-homoserine phosphate. The polypeptide is Homoserine kinase (Photobacterium profundum (strain SS9)).